Here is a 494-residue protein sequence, read N- to C-terminus: NADPH:adrenodoxin oxidoreductase, mitochondrial (494 aa).

The N-terminal 34 residues, 1–34, are a transit peptide targeting the mitochondrion; the sequence is MAPRCWRWWSWSAWPGVRPLPSRSTPTPGFCKKF. 4 residues coordinate FAD: Ala51, Glu72, Leu80, and Val116. NADP(+) is bound by residues 187–190, 231–232, and Glu243; these read QGNV and RR. Ser313 carries the phosphoserine modification. FAD-binding positions include Trp401 and 408–410; that span reads GVI. Position 408 (Gly408) interacts with NADP(+).

Belongs to the ferredoxin--NADP reductase type 1 family. As to quaternary structure, monomer. Interacts directly with FDX1. The cofactor is FAD.

Its subcellular location is the mitochondrion inner membrane. It catalyses the reaction 2 reduced [adrenodoxin] + NADP(+) + H(+) = 2 oxidized [adrenodoxin] + NADPH. It carries out the reaction 2 reduced [2Fe-2S]-[ferredoxin] + NADP(+) + H(+) = 2 oxidized [2Fe-2S]-[ferredoxin] + NADPH. The protein operates within steroid metabolism; cholesterol metabolism. Serves as the first electron transfer protein in all the mitochondrial P450 systems including cholesterol side chain cleavage in all steroidogenic tissues, steroid 11-beta hydroxylation in the adrenal cortex, 25-OH-vitamin D3-24 hydroxylation in the kidney, and sterol C-27 hydroxylation in the liver. Also acts as a ferredoxin--NADP(+) reductase essential for coenzyme Q biosynthesis: together with FDX2, transfers the electrons required for the hydroxylation reaction performed by COQ6. In Rattus norvegicus (Rat), this protein is NADPH:adrenodoxin oxidoreductase, mitochondrial (Fdxr).